A 449-amino-acid chain; its full sequence is Probable secreted beta-glucosidase ARB_04747 (449 aa).

The signal sequence occupies residues methionine 1–alanine 21. Asparagine 57 is a glycosylation site (N-linked (GlcNAc...) asparagine). Residues serine 96–cysteine 185 form a disordered region. Positions proline 98–lysine 125 are enriched in pro residues. Over residues glutamate 131–glycine 150 the composition is skewed to basic and acidic residues.

It belongs to the SUN family.

Its subcellular location is the secreted. It localises to the cell wall. In terms of biological role, cell surface beta-glucosidase involved in cytokinesis, cell wall biogenesis, adhesion to host tissue; thus playing an important role in the host-pathogen interaction. Has hydrolytic activity on linear (1-&gt;3)-beta-D-glucans such as laminaribiose and other laminarioligosaccharides. The chain is Probable secreted beta-glucosidase ARB_04747 from Arthroderma benhamiae (strain ATCC MYA-4681 / CBS 112371) (Trichophyton mentagrophytes).